The following is a 498-amino-acid chain: Lysine--tRNA ligase (498 aa).

Mg(2+) contacts are provided by glutamate 401 and glutamate 408.

This sequence belongs to the class-II aminoacyl-tRNA synthetase family. As to quaternary structure, homodimer. Mg(2+) is required as a cofactor.

Its subcellular location is the cytoplasm. It carries out the reaction tRNA(Lys) + L-lysine + ATP = L-lysyl-tRNA(Lys) + AMP + diphosphate. This chain is Lysine--tRNA ligase, found in Dehalococcoides mccartyi (strain ATCC BAA-2100 / JCM 16839 / KCTC 5957 / BAV1).